The chain runs to 274 residues: NH(3)-dependent NAD(+) synthetase (274 aa).

46–53 lines the ATP pocket; that stretch reads GISGGQDS. Position 52 (aspartate 52) interacts with Mg(2+). Arginine 140 provides a ligand contact to deamido-NAD(+). Threonine 160 serves as a coordination point for ATP. Residue glutamate 165 participates in Mg(2+) binding. Lysine 173 and aspartate 180 together coordinate deamido-NAD(+). Residues lysine 189 and threonine 211 each coordinate ATP. 260-261 contributes to the deamido-NAD(+) binding site; it reads HK.

Belongs to the NAD synthetase family. Homodimer.

The catalysed reaction is deamido-NAD(+) + NH4(+) + ATP = AMP + diphosphate + NAD(+) + H(+). Its pathway is cofactor biosynthesis; NAD(+) biosynthesis; NAD(+) from deamido-NAD(+) (ammonia route): step 1/1. In terms of biological role, catalyzes the ATP-dependent amidation of deamido-NAD to form NAD. Uses ammonia as a nitrogen source. This Streptococcus equi subsp. equi (strain 4047) protein is NH(3)-dependent NAD(+) synthetase.